The chain runs to 450 residues: MKITALASAILAVAQGALALPARAPALDITLSQVNNTRIKAVVKNSGTEKITFVHLNFFNDPSPVKKVSLYRNATEVEFTGIKQRLRSDGLSNDALTTLAPGATYEDEFDIASTANLTQGGPVTVRTQGFVPIAMNNKIAGYIPYSSNELELEVDAEKAVAVPASIKPLDRRTKITSSCTGNRATVLNTALRNAASIASKAADAASSGSSALFTEYFKSTSGNIRSAVAARLKAVASEASMNGGGSTTYYCSDPYGYCDSNVLAYTLPSTNEVVNCELFYTLQEVTNDCHGQDQATTIIHEFTHAPGVYPPGTEDLGYGYSAATALSTSNALNNADSYALFANAVYLNCQGQTGGQTTWDGYSQPGQTEPGTQTMWDGYSQPGQTEPGTQTMWDGYSQPGQTEPGTQTTWDGYSQPGQIEPCTQTMWDGGSEPGQTEPDAQTMWDNFYQA.

The signal sequence occupies residues 1–19 (MKITALASAILAVAQGALA). Positions 20–172 (LPARAPALDI…PASIKPLDRR (153 aa)) are excised as a propeptide. 2 disulfides stabilise this stretch: cysteine 179-cysteine 251 and cysteine 258-cysteine 276. Residue histidine 300 participates in Zn(2+) binding. Glutamate 301 is a catalytic residue. The Zn(2+) site is built by histidine 304 and aspartate 315. Residues 364 to 392 (QPGQTEPGTQTMWDGYSQPGQTEPGTQTM) are compositionally biased toward polar residues. The disordered stretch occupies residues 364–416 (QPGQTEPGTQTMWDGYSQPGQTEPGTQTMWDGYSQPGQTEPGTQTTWDGYSQP). Residues 398–409 (QPGQTEPGTQTT) are compositionally biased toward low complexity.

Belongs to the peptidase M35 family. The cofactor is Zn(2+).

It localises to the secreted. It catalyses the reaction Preferential cleavage of bonds with hydrophobic residues in P1'. Also 3-Asn-|-Gln-4 and 8-Gly-|-Ser-9 bonds in insulin B chain.. In terms of biological role, secreted metalloproteinase that allows assimilation of proteinaceous substrates. Shows high activities on basic nuclear substrates such as histone and protamine. May be involved in virulence. The sequence is that of Neutral protease 2 homolog AFUB_070680 from Aspergillus fumigatus (strain ATCC MYA-4609 / CBS 101355 / FGSC A1100 / Af293) (Neosartorya fumigata).